Reading from the N-terminus, the 274-residue chain is Cytochrome b-c1 complex subunit Rieske, mitochondrial (274 aa).

Residues 79-103 lie on the Mitochondrial matrix side of the membrane; that stretch reads SHTDVKVPDFSEYRRLEVLDSTKSS. The chain crosses the membrane as a helical span at residues 104-140; it reads RESSEARKGFSYLVTGVTTVGVAYAAKNAVTQFVSSM. Residues 141–274 are Mitochondrial intermembrane-facing; it reads SASADVLALA…FTSDDMVIVG (134 aa). The Rieske domain occupies 187–272; sequence EAAVELSQLR…YEFTSDDMVI (86 aa). The [2Fe-2S] cluster site is built by cysteine 217, histidine 219, cysteine 236, histidine 239, and serine 241. Cysteines 222 and 238 form a disulfide.

It belongs to the Rieske iron-sulfur protein family. In terms of assembly, component of the ubiquinol-cytochrome c oxidoreductase (cytochrome b-c1 complex, complex III, CIII), a multisubunit enzyme composed of 11 subunits. The complex is composed of 3 respiratory subunits cytochrome b, cytochrome c1 and Rieske protein UQCRFS1, 2 core protein subunits UQCRC1/QCR1 and UQCRC2/QCR2, and 6 low-molecular weight protein subunits UQCRH/QCR6, UQCRB/QCR7, UQCRQ/QCR8, UQCR10/QCR9, UQCR11/QCR10 and subunit 9, the cleavage product of Rieske protein UQCRFS1. The complex exists as an obligatory dimer and forms supercomplexes (SCs) in the inner mitochondrial membrane with NADH-ubiquinone oxidoreductase (complex I, CI) and cytochrome c oxidase (complex IV, CIV), resulting in different assemblies (supercomplex SCI(1)III(2)IV(1) and megacomplex MCI(2)III(2)IV(2)). Incorporation of the Rieske protein UQCRFS1 is the penultimate step in complex III assembly. Interacts with TTC19, which is involved in the clearance of UQCRFS1 fragments. As to quaternary structure, component of the ubiquinol-cytochrome c oxidoreductase (cytochrome b-c1 complex, complex III, CIII). Subunit 9 corresponds to the mitochondrial targeting sequence (MTS) of Rieske protein UQCRFS1. It is retained after processing and incorporated inside complex III, where it remains bound to the complex and localizes between the 2 core subunits UQCRC1/QCR1 and UQCRC2/QCR2. [2Fe-2S] cluster serves as cofactor. In terms of processing, proteolytic processing is necessary for the correct insertion of UQCRFS1 in the complex III dimer. Several fragments are generated during UQCRFS1 insertion, most probably due to the endogenous matrix-processing peptidase (MPP) activity of the 2 core protein subunits UQCRC1/QCR1 and UQCRC2/QCR2, which are homologous to the 2 mitochondrial-processing peptidase (MPP) subunits beta-MPP and alpha-MPP respectively. The action of the protease is also necessary for the clearance of the UQCRFS1 fragments.

It localises to the mitochondrion inner membrane. The catalysed reaction is a quinol + 2 Fe(III)-[cytochrome c](out) = a quinone + 2 Fe(II)-[cytochrome c](out) + 2 H(+)(out). Component of the ubiquinol-cytochrome c oxidoreductase, a multisubunit transmembrane complex that is part of the mitochondrial electron transport chain which drives oxidative phosphorylation. The respiratory chain contains 3 multisubunit complexes succinate dehydrogenase (complex II, CII), ubiquinol-cytochrome c oxidoreductase (cytochrome b-c1 complex, complex III, CIII) and cytochrome c oxidase (complex IV, CIV), that cooperate to transfer electrons derived from NADH and succinate to molecular oxygen, creating an electrochemical gradient over the inner membrane that drives transmembrane transport and the ATP synthase. The cytochrome b-c1 complex catalyzes electron transfer from ubiquinol to cytochrome c, linking this redox reaction to translocation of protons across the mitochondrial inner membrane, with protons being carried across the membrane as hydrogens on the quinol. In the process called Q cycle, 2 protons are consumed from the matrix, 4 protons are released into the intermembrane space and 2 electrons are passed to cytochrome c. The Rieske protein is a catalytic core subunit containing a [2Fe-2S] iron-sulfur cluster. It cycles between 2 conformational states during catalysis to transfer electrons from the quinol bound in the Q(0) site in cytochrome b to cytochrome c1. Incorporation of UQCRFS1 is the penultimate step in complex III assembly. Its function is as follows. Component of the ubiquinol-cytochrome c oxidoreductase (cytochrome b-c1 complex, complex III, CIII). UQCRFS1 undergoes proteolytic processing once it is incorporated in the complex III dimer. One of the fragments, called subunit 9, corresponds to its mitochondrial targeting sequence (MTS). The proteolytic processing is necessary for the correct insertion of UQCRFS1 in the complex III dimer, but the persistence of UQCRFS1-derived fragments may prevent newly imported UQCRFS1 to be processed and assembled into complex III and is detrimental for the complex III structure and function. This chain is Cytochrome b-c1 complex subunit Rieske, mitochondrial (UQCRFS1), found in Pan paniscus (Pygmy chimpanzee).